The following is a 123-amino-acid chain: Ferredoxin-5 (123 aa).

Positions 2–119 constitute a 2Fe-2S ferredoxin-type domain; sequence PNITFTSPIM…DVMVHFTGTP (118 aa). Residues Cys-42, Cys-47, Cys-50, and Cys-102 each contribute to the [2Fe-2S] cluster site.

It belongs to the 2Fe2S plant-type ferredoxin family. It depends on [2Fe-2S] cluster as a cofactor.

Functionally, ferredoxins are iron-sulfur proteins that transfer electrons in a wide variety of metabolic reactions. This ferredoxin probably participates in nitrogen fixation. In Rhodobacter capsulatus (Rhodopseudomonas capsulata), this protein is Ferredoxin-5 (fdxD).